We begin with the raw amino-acid sequence, 401 residues long: MVSRTKNRRNKARKVVSRSTALVPMAPASQRTGPAPRKPRKRNQALVRNPRLTDAGLAFLKCAFAAPDFSVDPGKGIPDNFHGRTLAIKDCNTTSVVFTPNTDTYIVVAPVPGFAYFRAEVAVGAQPTTFVGVPYPTYATNFGAGSQNGLPAVNNYSKFRYASMACGLYPTSNMMQFSGSVQVWRVDLNLSEAVNPAVTAITPAPGVFANFVDKRINGLRGIRPLAPRDNYSGNFIDGAYTFAFDKSTDFEWCDFVRSLEFSESNVLGAATAMKLLAPGGGTDTTLTGLGNVNTLVYKISTPTGAVNTAILRTWNCIELQPYTDSALFQFSGVSPPFDPLALECYHNLKMRFPVAVSSRENSKFWEGVLRVLNQISGTLSVIPGPVGTISAGVHQLTGMYM.

Over residues 1–16 the composition is skewed to basic residues; it reads MVSRTKNRRNKARKVV. A disordered region spans residues 1–43; that stretch reads MVSRTKNRRNKARKVVSRSTALVPMAPASQRTGPAPRKPRKRN. Residues C62 and C316 are joined by a disulfide bond. Residue D68 is part of the active site. The Ca(2+) site is built by D249, E251, and A272.

The protein belongs to the peptidase A6 family. In terms of processing, capsid protein alpha autocatalytically maturates into capsid protein beta and peptide gamma.

The protein localises to the virion. The enzyme catalyses Hydrolysis of an asparaginyl bond involved in the maturation of the structural protein of the virus, typically -Asn-|-Ala- or -Asn-|-Phe-.. Its function is as follows. Capsid protein alpha self-assembles to form an icosahedral procapsid with a T=3 symmetry, about 30 nm in diameter, and consisting of 60 capsid proteins trimers. In addition, 240 calcium ions are incorporated per capsid during assembly. The capsid encapsulates the two genomic RNAs. Capsid maturation occurs via autoproteolytic cleavage of capsid protein alpha generating capsid protein beta and the membrane-active peptide gamma. In terms of biological role, membrane-permeabilizing peptide produced by virus maturation, thereby creating the infectious virion. After endocytosis into the host cell, peptide gamma is probably exposed in endosomes, where it permeabilizes the endosomal membrane, facilitating translocation of viral capsid or RNA into the cytoplasm. Involved in specific recognition and packaging of viral RNA during assembly. The protein is Capsid protein alpha (alpha) of Spodoptera eridania (Southern armyworm).